Reading from the N-terminus, the 377-residue chain is uncharacterized protein (377 aa).

Disordered regions lie at residues 10–79, 91–141, 182–257, 265–284, and 289–326; these read YSDG…NVNN, KKNN…DKEE, EAKK…TTTT, ENENQEKENNDNDNDNEPIE, and LEFNKFEEKPIKEVKVNTASSNKRNKKRNNPKKVKEEP. Composition is skewed to low complexity over residues 14 to 24, 46 to 79, and 93 to 124; these read IPQPTITPPTQ, NKNNRNNKNNVDNNNNNNNNNNNNEKQNQTNVNN, and NNNNNNNNNNNNNNNNNNNNNNKNKYNKFNDN. 2 stretches are compositionally biased toward basic and acidic residues: residues 182 to 196 and 209 to 218; these read EAKKKEEEDARKRGE and QTPDKKKKLE. Over residues 221–257 the composition is skewed to low complexity; it reads TSKNNNKSSTTKTELTNTTTNTSSTTNPTTDTTTTTT. 2 stretches are compositionally biased toward basic and acidic residues: residues 265-274 and 292-303; these read ENENQEKENN and NKFEEKPIKEVK. A compositionally biased stretch (basic residues) spans 311 to 320; that stretch reads KRNKKRNNPK.

This is an uncharacterized protein from Dictyostelium discoideum (Social amoeba).